The chain runs to 346 residues: Large ribosomal subunit protein uL3 (346 aa).

Residues 324-346 (RPPKKKPPVERPQITYVSRESKQ) are disordered.

It belongs to the universal ribosomal protein uL3 family. Part of the 50S ribosomal subunit. Forms a cluster with proteins L14 and L24e.

In terms of biological role, one of the primary rRNA binding proteins, it binds directly near the 3'-end of the 23S rRNA, where it nucleates assembly of the 50S subunit. The polypeptide is Large ribosomal subunit protein uL3 (Thermococcus kodakarensis (strain ATCC BAA-918 / JCM 12380 / KOD1) (Pyrococcus kodakaraensis (strain KOD1))).